We begin with the raw amino-acid sequence, 567 residues long: Proline--tRNA ligase (567 aa).

Belongs to the class-II aminoacyl-tRNA synthetase family. ProS type 1 subfamily. As to quaternary structure, homodimer.

It is found in the cytoplasm. The catalysed reaction is tRNA(Pro) + L-proline + ATP = L-prolyl-tRNA(Pro) + AMP + diphosphate. Its function is as follows. Catalyzes the attachment of proline to tRNA(Pro) in a two-step reaction: proline is first activated by ATP to form Pro-AMP and then transferred to the acceptor end of tRNA(Pro). As ProRS can inadvertently accommodate and process non-cognate amino acids such as alanine and cysteine, to avoid such errors it has two additional distinct editing activities against alanine. One activity is designated as 'pretransfer' editing and involves the tRNA(Pro)-independent hydrolysis of activated Ala-AMP. The other activity is designated 'posttransfer' editing and involves deacylation of mischarged Ala-tRNA(Pro). The misacylated Cys-tRNA(Pro) is not edited by ProRS. The polypeptide is Proline--tRNA ligase (Campylobacter fetus subsp. fetus (strain 82-40)).